A 450-amino-acid polypeptide reads, in one-letter code: Serine/threonine-protein kinase SSN3 (450 aa).

The region spanning 40 to 393 is the Protein kinase domain; that stretch reads YRIIGFISSG…AAQALQSPFF (354 aa). Residues 46-54 and K71 each bind ATP; that span reads ISSGTYGRV. D173 functions as the Proton acceptor in the catalytic mechanism. Disordered stretches follow at residues 307 to 341 and 418 to 450; these read ASSHHNHHSHHHPHHHHGHYGSRNPPPPGGSNLEK and QDDNDIRTSSLPGTKRSGLPDDSLIRPAKRQKE. Over residues 310–326 the composition is skewed to basic residues; the sequence is HHNHHSHHHPHHHHGHY.

Belongs to the protein kinase superfamily. CMGC Ser/Thr protein kinase family. CDC2/CDKX subfamily. In terms of assembly, component of the SRB8-11 complex, a regulatory module of the Mediator complex. Interacts with SSN8/FCC1. Mg(2+) is required as a cofactor.

Its subcellular location is the nucleus. It carries out the reaction L-seryl-[protein] + ATP = O-phospho-L-seryl-[protein] + ADP + H(+). It catalyses the reaction L-threonyl-[protein] + ATP = O-phospho-L-threonyl-[protein] + ADP + H(+). The catalysed reaction is [DNA-directed RNA polymerase] + ATP = phospho-[DNA-directed RNA polymerase] + ADP + H(+). In terms of biological role, component of the SRB8-11 complex. The SRB8-11 complex is a regulatory module of the Mediator complex which is itself involved in regulation of basal and activated RNA polymerase II-dependent transcription. The SRB8-11 complex may be involved in the transcriptional repression of a subset of genes regulated by Mediator. It may inhibit the association of the Mediator complex with RNA polymerase II to form the holoenzyme complex. The SRB8-11 complex phosphorylates the C-terminal domain (CTD) of the largest subunit of RNA polymerase II. Required for normal growth and secondary metabolism. The polypeptide is Serine/threonine-protein kinase SSN3 (SSN3) (Gibberella moniliformis (Maize ear and stalk rot fungus)).